A 349-amino-acid polypeptide reads, in one-letter code: MGKGGSLSEGVIKNIIISYTYVAIWIFLSFTVIVYNKYILDKKMYDWPFPISLTMIHMSFCSTLAFLLIKVFKFVEPVSMSRDTYLRSVVPIGALYSLSLWLSNSAYIYLSVSFIQMLKALMPVAVYSIGVLFKKEGFKSETMMNMLSISFGVAIAAYGEARFDVWGVILQLGAVAFEATRLVMIQILLTSKGITLNPITSLYYVAPCCLAFLFIPWIVVEFPILRDTSSFHFDYLIFGTNSFCAFALNLAVFLLVGKTSALTMNVAGVVKDWLLIAFSWSVIKDTVTPINLFGYGIAFLGVAYYNHAKLQALKAKEAQKTAQQVDEETGRLLEEREGNEGGRKNEPED.

The next 10 helical transmembrane spans lie at 15 to 35 (IIIS…VIVY), 49 to 69 (FPIS…FLLI), 89 to 109 (VVPI…AYIY), 113 to 133 (SFIQ…GVLF), 141 to 161 (ETMM…YGEA), 165 to 185 (VWGV…LVMI), 205 to 225 (VAPC…FPIL), 236 to 256 (LIFG…FLLV), 263 to 283 (TMNV…WSVI), and 286 to 306 (TVTP…AYYN). The region spanning 38 to 156 (YILDKKMYDW…LSISFGVAIA (119 aa)) is the EamA domain. The tract at residues 321–349 (TAQQVDEETGRLLEEREGNEGGRKNEPED) is disordered. Over residues 328 to 349 (ETGRLLEEREGNEGGRKNEPED) the composition is skewed to basic and acidic residues.

The protein belongs to the TPT transporter family. TPT (TC 2.A.7.9) subfamily.

The protein localises to the membrane. The chain is Probable sugar phosphate/phosphate translocator At5g25400 from Arabidopsis thaliana (Mouse-ear cress).